The sequence spans 35 residues: Non-specific lipid-transfer protein 1 (35 aa).

A disulfide bridge links Cys-13 with Cys-28.

Seeds.

Plant non-specific lipid-transfer proteins transfer phospholipids as well as galactolipids across membranes. May play a role in wax or cutin deposition in the cell walls of expanding epidermal cells and certain secretory tissues. Inhibits the growth of F.oxysporum and P.infestans. The sequence is that of Non-specific lipid-transfer protein 1 from Nigella sativa (Black cumin).